Consider the following 130-residue polypeptide: Small ribosomal subunit protein uS11 (130 aa).

Belongs to the universal ribosomal protein uS11 family. As to quaternary structure, part of the 30S ribosomal subunit. Interacts with proteins S7 and S18. Binds to IF-3.

In terms of biological role, located on the platform of the 30S subunit, it bridges several disparate RNA helices of the 16S rRNA. Forms part of the Shine-Dalgarno cleft in the 70S ribosome. The polypeptide is Small ribosomal subunit protein uS11 (Shewanella amazonensis (strain ATCC BAA-1098 / SB2B)).